Reading from the N-terminus, the 431-residue chain is Enolase (431 aa).

Glutamine 166 lines the (2R)-2-phosphoglycerate pocket. Residue glutamate 208 is the Proton donor of the active site. Positions 245, 288, and 315 each coordinate Mg(2+). (2R)-2-phosphoglycerate-binding residues include lysine 340, arginine 369, serine 370, and lysine 391. Lysine 340 (proton acceptor) is an active-site residue.

It belongs to the enolase family. The cofactor is Mg(2+).

It is found in the cytoplasm. The protein localises to the secreted. Its subcellular location is the cell surface. The catalysed reaction is (2R)-2-phosphoglycerate = phosphoenolpyruvate + H2O. The protein operates within carbohydrate degradation; glycolysis; pyruvate from D-glyceraldehyde 3-phosphate: step 4/5. Its function is as follows. Catalyzes the reversible conversion of 2-phosphoglycerate (2-PG) into phosphoenolpyruvate (PEP). It is essential for the degradation of carbohydrates via glycolysis. The polypeptide is Enolase (Clostridium botulinum (strain Loch Maree / Type A3)).